We begin with the raw amino-acid sequence, 411 residues long: Eukaryotic initiation factor 4A-III (411 aa).

An N-acetylmethionine modification is found at methionine 1. Alanine 2 carries the post-translational modification N-acetylalanine; in Eukaryotic initiation factor 4A-III, N-terminally processed. Serine 10 and serine 12 each carry phosphoserine. Lysine 19 participates in a covalent cross-link: Glycyl lysine isopeptide (Lys-Gly) (interchain with G-Cter in SUMO2). Positions 38–66 (PTFDTMGLREDLLRGIYAYGFEKPSAIQQ) match the Q motif motif. ATP contacts are provided by residues lysine 60, glutamine 65, and 85 to 90 (GTGKTA). Positions 69–239 (IKQIIKGRDV…NKFMTDPIRI (171 aa)) constitute a Helicase ATP-binding domain. At lysine 124 the chain carries N6-acetyllysine. A Glycyl lysine isopeptide (Lys-Gly) (interchain with G-Cter in SUMO2) cross-link involves residue lysine 152. Threonine 163 carries the phosphothreonine modification. A DEAD box motif is present at residues 187 to 190 (DEAD). N6-acetyllysine occurs at positions 198 and 296. The Helicase C-terminal domain occupies 250 to 411 (GIKQFFVAVE…EMPMNVADLI (162 aa)). Lysine 314 participates in a covalent cross-link: Glycyl lysine isopeptide (Lys-Gly) (interchain with G-Cter in SUMO2). Lysine 321 carries the N6-acetyllysine modification. Residues aspartate 342 and 367–371 (RSGRY) each bind ATP. Residues lysine 374 and lysine 382 each participate in a glycyl lysine isopeptide (Lys-Gly) (interchain with G-Cter in SUMO2) cross-link.

Belongs to the DEAD box helicase family. eIF4A subfamily. In terms of assembly, identified in the spliceosome C complex. Core component of the mRNA splicing-dependent exon junction complex (EJC); the core complex contains CASC3, EIF4A3, MAGOH or MAGOHB, and RBM8A. Interacts with CASC3, MAGOH, NXF1, RBM8A and ALYREF/THOC4. Component of the ALYREF/THOC4-EJC-RNA complex; in the complex interacts with MAGOH, RBM8A and THOC4 (via the WXHD motif); these interactions are likely specific to RNA-bound EJC. May interact with NOM1. Interacts with POLDIP3. Interacts with CWC22 and PRPF19 in an RNA-independent manner. Direct interaction with CWC22 is mediated by the helicase C-terminal domain. Full interaction with CWC22 occurs only when EIF4A3 is not part of the EJC and prevents EIF4A3 binding to RNA. Identified in a complex composed of the EJC core, UPF3B and UPF2. The EJC core can also interact with UPF3A (in vitro). Interacts with NCBP3. Interacts with NRDE2. Interacts with DHX34; the interaction is RNA-independent.

Its subcellular location is the nucleus. The protein localises to the nucleus speckle. It localises to the cytoplasm. It carries out the reaction ATP + H2O = ADP + phosphate + H(+). With respect to regulation, the ATPase activity is increased some 4-fold in the presence of RNA. In terms of biological role, ATP-dependent RNA helicase. Involved in pre-mRNA splicing as component of the spliceosome. Core component of the splicing-dependent multiprotein exon junction complex (EJC) deposited at splice junctions on mRNAs. The EJC is a dynamic structure consisting of core proteins and several peripheral nuclear and cytoplasmic associated factors that join the complex only transiently either during EJC assembly or during subsequent mRNA metabolism. The EJC marks the position of the exon-exon junction in the mature mRNA for the gene expression machinery and the core components remain bound to spliced mRNAs throughout all stages of mRNA metabolism thereby influencing downstream processes including nuclear mRNA export, subcellular mRNA localization, translation efficiency and nonsense-mediated mRNA decay (NMD). Its RNA-dependent ATPase and RNA-helicase activities are induced by CASC3, but abolished in presence of the MAGOH-RBM8A heterodimer, thereby trapping the ATP-bound EJC core onto spliced mRNA in a stable conformation. The inhibition of ATPase activity by the MAGOH-RBM8A heterodimer increases the RNA-binding affinity of the EJC. Involved in translational enhancement of spliced mRNAs after formation of the 80S ribosome complex. Binds spliced mRNA in sequence-independent manner, 20-24 nucleotides upstream of mRNA exon-exon junctions. Shows higher affinity for single-stranded RNA in an ATP-bound core EJC complex than after the ATP is hydrolyzed. Involved in the splicing modulation of BCL2L1/Bcl-X (and probably other apoptotic genes); specifically inhibits formation of proapoptotic isoforms; the function is different from the established EJC assembly. Involved in craniofacial development. The polypeptide is Eukaryotic initiation factor 4A-III (EIF4A3) (Bos taurus (Bovine)).